The chain runs to 936 residues: Lipoxygenase 2.1, chloroplastic (936 aa).

A disordered region spans residues 1-69 (MLTATKPLVG…LSADSNGAAV (69 aa)). Over residues 47-59 (STSTSTTTTTTTT) the composition is skewed to low complexity. In terms of domain architecture, PLAT spans 88 to 217 (MKATVTVHMS…CTPDKRVFFP (130 aa)). The Lipoxygenase domain occupies 220 to 936 (SYLPSQTPKG…EMGIPNSISI (717 aa)). The tract at residues 264–308 (LGNPDDDNNPTTRPVLGGKEHPYPRRCRTGRPRSKKDPFSEERSH) is disordered. Residues 287-297 (PRRCRTGRPRS) are compositionally biased toward basic residues. The span at 298-308 (KKDPFSEERSH) shows a compositional bias: basic and acidic residues. Residues His587, His592, His777, Asn781, and Ile936 each contribute to the Fe cation site.

This sequence belongs to the lipoxygenase family. Fe cation serves as cofactor. Post-translationally, the N-terminus is blocked.

It localises to the plastid. The protein localises to the chloroplast. It carries out the reaction (9Z,12Z)-octadecadienoate + O2 = (13S)-hydroperoxy-(9Z,11E)-octadecadienoate. The enzyme catalyses (9Z,12Z,15Z)-octadecatrienoate + O2 = (13S)-hydroperoxy-(9Z,11E,15Z)-octadecatrienoate. It participates in lipid metabolism; oxylipin biosynthesis. Plant lipoxygenase may be involved in a number of diverse aspects of plant physiology including growth and development, pest resistance, and senescence or responses to wounding. This enzyme is possibly involved in jasmonic acid synthesis. It exhibits linoleate 13-lipoxygenase and arachidonate 15-lipoxygenase activity. The protein is Lipoxygenase 2.1, chloroplastic (LOX2.1) of Hordeum vulgare (Barley).